The following is a 557-amino-acid chain: Leucine-rich glioma-inactivated protein 1 (557 aa).

Positions 1-34 (MESESSRRMGNACIPLKRIAYFLCLFSVVLLTEG) are cleaved as a signal peptide. Residues 35–72 (KKPAKPKCPAVCTCSKDNALCENARSIPRTVPPDVISL) enclose the LRRNT domain. LRR repeat units follow at residues 92 to 113 (SLQL…AFIG), 116 to 137 (HLEY…TFRG), and 140 to 161 (SLIH…IFKG). The LRRCT domain occupies 173–223 (NAFNCDCKLKWLVEWLGHTNATVEDIYCEGPPEYKKRKINSLSPKDFDCII). N192 is a glycosylation site (N-linked (GlcNAc...) asparagine). 7 EAR repeats span residues 225 to 267 (EFAK…EWDH), 271 to 313 (TFRN…KRDG), 317 to 364 (KFIK…KWNG), 366 to 415 (GFYS…QWSK), 419 to 462 (LFTN…KWGG), 464 to 506 (SFQD…NWDA), and 510 to 552 (KFVK…KHVI). N277 carries N-linked (GlcNAc...) asparagine glycosylation. N-linked (GlcNAc...) asparagine glycosylation occurs at N422.

As to quaternary structure, oligomer. Interacts with KCNA1 within a complex containing KCNA1, KCNA4 and KCNAB1. Part of a complex containing ADAM22, DLG4/PSD95 and CACNG2 (stargazin). Can bind to ADAM11 and ADAM23. Glycosylated. Expressed in the brain (at protein level). Expressed in cerebellar cortex basket cell terminals (at protein level). Highly expressed in the dentate gyrus and CA3 field of the hippocampus.

It is found in the secreted. Its subcellular location is the synapse. The protein resides in the cytoplasm. It localises to the golgi apparatus. The protein localises to the endoplasmic reticulum. Its function is as follows. Regulates voltage-gated potassium channels assembled from KCNA1, KCNA4 and KCNAB1. It slows down channel inactivation by precluding channel closure mediated by the KCNAB1 subunit. Ligand for ADAM22 that positively regulates synaptic transmission mediated by AMPA-type glutamate receptors. Plays a role in suppressing the production of MMP1/3 through the phosphatidylinositol 3-kinase/ERK pathway. This chain is Leucine-rich glioma-inactivated protein 1, found in Mus musculus (Mouse).